Reading from the N-terminus, the 477-residue chain is Cysteine--tRNA ligase (477 aa).

Zn(2+) is bound at residue C28. Positions 30 to 40 (PTVYDYPHLGH) match the 'HIGH' region motif. Positions 208, 233, and 237 each coordinate Zn(2+). Residues 265-269 (KMSKS) carry the 'KMSKS' region motif. Residue K268 participates in ATP binding.

The protein belongs to the class-I aminoacyl-tRNA synthetase family. It depends on Zn(2+) as a cofactor.

The protein localises to the cytoplasm. The enzyme catalyses tRNA(Cys) + L-cysteine + ATP = L-cysteinyl-tRNA(Cys) + AMP + diphosphate. The chain is Cysteine--tRNA ligase from Pyrococcus furiosus (strain ATCC 43587 / DSM 3638 / JCM 8422 / Vc1).